We begin with the raw amino-acid sequence, 439 residues long: Histidinol dehydrogenase (439 aa).

3 residues coordinate NAD(+): Tyr-127, Gln-185, and Asn-208. Substrate-binding residues include Ser-234, Gln-256, and His-259. Zn(2+) contacts are provided by Gln-256 and His-259. Residues Glu-323 and His-324 each act as proton acceptor in the active site. Residues His-324, Asp-357, Glu-411, and His-416 each contribute to the substrate site. Zn(2+) is bound at residue Asp-357. His-416 provides a ligand contact to Zn(2+).

Belongs to the histidinol dehydrogenase family. Requires Zn(2+) as cofactor.

It carries out the reaction L-histidinol + 2 NAD(+) + H2O = L-histidine + 2 NADH + 3 H(+). Its pathway is amino-acid biosynthesis; L-histidine biosynthesis; L-histidine from 5-phospho-alpha-D-ribose 1-diphosphate: step 9/9. Catalyzes the sequential NAD-dependent oxidations of L-histidinol to L-histidinaldehyde and then to L-histidine. The protein is Histidinol dehydrogenase of Aliivibrio fischeri (strain ATCC 700601 / ES114) (Vibrio fischeri).